We begin with the raw amino-acid sequence, 246 residues long: Probable transcriptional regulatory protein ORF2U (246 aa).

Belongs to the TACO1 family.

Its subcellular location is the cytoplasm. In Hathewaya histolytica (Clostridium histolyticum), this protein is Probable transcriptional regulatory protein ORF2U.